The chain runs to 448 residues: Beta-alanine--pyruvate aminotransferase (448 aa).

W61 is a binding site for substrate. 120–121 serves as a coordination point for pyridoxal 5'-phosphate; the sequence is GS. K288 carries the post-translational modification N6-(pyridoxal phosphate)lysine. T327 provides a ligand contact to pyridoxal 5'-phosphate. Substrate contacts are provided by R414 and Q421.

It belongs to the class-III pyridoxal-phosphate-dependent aminotransferase family. In terms of assembly, homotetramer. Requires pyridoxal 5'-phosphate as cofactor.

It carries out the reaction 3-oxopropanoate + L-alanine = beta-alanine + pyruvate. Its activity is regulated as follows. Inhibited by gabaculine (5-amino-1,3-cyclohexadienylcarboxylic acid). Functionally, involved in the degradation of beta-alanine. Catalyzes the transfer of the amino group from beta-alanine to pyruvate to yield L-alanine and 3-oxopropanoate. It can also accept both 4-aminobutyrate and (S)-alpha-methylbenzylamine (MBA) as amino-group donors in the presence of pyruvate as an amine acceptor. The protein is Beta-alanine--pyruvate aminotransferase (bauA) of Pseudomonas aeruginosa (strain ATCC 15692 / DSM 22644 / CIP 104116 / JCM 14847 / LMG 12228 / 1C / PRS 101 / PAO1).